The primary structure comprises 455 residues: Retinoic acid receptor beta (455 aa).

The segment at M1–P87 is modulating. The interval L44 to P78 is disordered. Positions H47–T66 are enriched in polar residues. 2 NR C4-type zinc fingers span residues C88 to C108 and C124 to C148. Positions C88–M153 form a DNA-binding region, nuclear receptor. Positions S154–A182 are hinge. The 235-residue stretch at E183–S417 folds into the NR LBD domain. The tract at residues N416 to Q455 is disordered. Residues T424–H434 show a composition bias toward polar residues. Residues S435–Q455 show a composition bias toward low complexity.

The protein belongs to the nuclear hormone receptor family. NR1 subfamily. In terms of assembly, heterodimer; with a RXR molecule. Binds DNA preferentially as a RAR/RXR heterodimer.

It localises to the nucleus. Receptor for retinoic acid. Retinoic acid receptors bind as heterodimers to their target response elements in response to their ligands, all-trans or 9-cis retinoic acid, and regulate gene expression in various biological processes. The RAR/RXR heterodimers bind to the retinoic acid response elements (RARE) composed of tandem 5'-AGGTCA-3' sites known as DR1-DR5. Required for limb and craniofacial development. The sequence is that of Retinoic acid receptor beta (RARB) from Gallus gallus (Chicken).